Consider the following 580-residue polypeptide: RuBisCO large subunit-binding protein subunit alpha, chloroplastic (580 aa).

The span at 1–17 (MAQSQLAKGSRQTTGRP) shows a compositional bias: polar residues. Residues 1–24 (MAQSQLAKGSRQTTGRPFQNKPAR) are disordered.

It belongs to the chaperonin (HSP60) family. As to quaternary structure, oligomer of probably six alpha and six beta subunits.

Its subcellular location is the plastid. The protein resides in the chloroplast. This protein binds RuBisCO small and large subunits and is implicated in the assembly of the enzyme oligomer. The protein is RuBisCO large subunit-binding protein subunit alpha, chloroplastic of Chlamydomonas reinhardtii (Chlamydomonas smithii).